The sequence spans 68 residues: MKRQKRNKDDRAYNRGYNAGLDGKSREDCPFGTLQARTNWMGGWREGRTDFAHGMLGVASIQNLKNIG.

It belongs to the ribosome modulation factor family.

The protein localises to the cytoplasm. Functionally, during stationary phase, converts 70S ribosomes to an inactive dimeric form (100S ribosomes). This chain is Ribosome modulation factor, found in Alcanivorax borkumensis (strain ATCC 700651 / DSM 11573 / NCIMB 13689 / SK2).